Reading from the N-terminus, the 773-residue chain is DC-STAMP domain-containing protein 2 (773 aa).

The Cytoplasmic portion of the chain corresponds to 1-26 (MPKVMKDVVHPLGGEEPSMARAVVRS). A helical transmembrane segment spans residues 27–47 (VGGFTLGLSLATAYGLLELLV). The Extracellular portion of the chain corresponds to 48–51 (EGHS). The helical transmembrane segment at 52–72 (PWGCLVGTLTLAAFLSLGMGF) threads the bilayer. The Cytoplasmic segment spans residues 73 to 233 (SRQVRATVLL…IPQAYHLCYV (161 aa)). A helical transmembrane segment spans residues 234–254 (LMPFKLALCGLASLVQVFCVI). The Extracellular portion of the chain corresponds to 255 to 322 (PKYIQPFLRQ…SMKLHRVREA (68 aa)). N-linked (GlcNAc...) asparagine glycans are attached at residues Asn-284 and Asn-296. Residues 323–343 (LALMGFTTPLLLVLLYLQALF) form a helical membrane-spanning segment. Residues 344 to 415 (YRYCYLNWDH…ILETFNLIRH (72 aa)) lie on the Cytoplasmic side of the membrane. A helical membrane pass occupies residues 416-436 (LLLVLFLVFLDYAVFWVLDLA). Over 437–499 (RHQLQGEIVA…LRPSEPDSTG (63 aa)) the chain is Extracellular. An N-linked (GlcNAc...) asparagine glycan is attached at Asn-480. A helical membrane pass occupies residues 500–520 (YIVIGVMYGLCFFITLFGSYV). Topologically, residues 521–773 (SRLRRVICAS…LPDPSHPPPK (253 aa)) are cytoplasmic. Low complexity predominate over residues 692 to 701 (SLSMESTSES). The disordered stretch occupies residues 692–773 (SLSMESTSES…LPDPSHPPPK (82 aa)). The span at 758–773 (PLSPPSLPDPSHPPPK) shows a compositional bias: pro residues.

In terms of assembly, interacts with DCST1.

Its subcellular location is the cytoplasmic vesicle. It is found in the secretory vesicle. The protein resides in the acrosome membrane. Its function is as follows. Essential sperm cell-surface protein required for sperm-egg fusion and fertilization. This chain is DC-STAMP domain-containing protein 2 (DCST2), found in Homo sapiens (Human).